Consider the following 347-residue polypeptide: Dihydroorotate dehydrogenase (quinone) (347 aa).

FMN contacts are provided by residues 65 to 69 (AGLDK) and Thr-89. Lys-69 serves as a coordination point for substrate. 114–118 (NRMGF) is a binding site for substrate. FMN is bound by residues Asn-146 and Asn-179. Residue Asn-179 coordinates substrate. The active-site Nucleophile is the Ser-182. A substrate-binding site is contributed by Asn-184. FMN-binding residues include Lys-224 and Thr-252. Residue 253–254 (NT) coordinates substrate. FMN contacts are provided by residues Gly-275, Gly-304, and 325-326 (YT).

This sequence belongs to the dihydroorotate dehydrogenase family. Type 2 subfamily. Monomer. FMN serves as cofactor.

The protein resides in the cell membrane. It carries out the reaction (S)-dihydroorotate + a quinone = orotate + a quinol. The protein operates within pyrimidine metabolism; UMP biosynthesis via de novo pathway; orotate from (S)-dihydroorotate (quinone route): step 1/1. Its function is as follows. Catalyzes the conversion of dihydroorotate to orotate with quinone as electron acceptor. In Herminiimonas arsenicoxydans, this protein is Dihydroorotate dehydrogenase (quinone).